The chain runs to 177 residues: Large ribosomal subunit protein uL5 (177 aa).

This sequence belongs to the universal ribosomal protein uL5 family. In terms of assembly, part of the 50S ribosomal subunit. Interacts with protein L18 and the 5S rRNA, and probably with tRNAs. Forms a bridge to the 30S subunit in the 70S ribosome.

In terms of biological role, this is 1 of 5 proteins that mediates the attachment of the 5S rRNA onto the large ribosomal subunit, stabilizing the orientation of adjacent RNA domains. Forms part of the central protuberance. Modeling places the A and P site tRNAs in close proximity to this protein; the 5S rRNA and some of its associated proteins might help stabilize positioning of ribosome-bound tRNAs. In the 70S ribosome it is thought to contact protein S13 of the 30S subunit (bridge B1b), connecting the 2 subunits; this bridge is implicated in subunit movement. In Haloarcula marismortui (strain ATCC 43049 / DSM 3752 / JCM 8966 / VKM B-1809) (Halobacterium marismortui), this protein is Large ribosomal subunit protein uL5 (rpl5).